The following is a 365-amino-acid chain: MKMVFRWYGEGNDSVTLEQIRQIPGVEGIVWALHHQPPGEEWPLEEILEVKRQCEQHGFHIEVVESVNIHEDIKLGLPTRDLYIEKYKRTIENLAKAGVKVICYNFMPVFDWLRTDLYKKAPDGSTALFYEHAKVHTIDPFALVDQIAKHPEFTMPGWEPERLEHLTRLFEAYQNVTEEDLWSHLHYFLERIIPTAARCGIKMAIHPDDPPWPVFGLPRIMTSGESIGRLLQLVDHPANGVTLCSGSLGANPENDISAMIHAYADRIPFAHIRNVKVYENGDFIETSHRTKDGTVDICGIVKAYHETGFSGYVRPDHGRHIWDEKCRPGYGLYDRALGIMYLWGIWDSLNREKQEASKCLKSMKI.

It belongs to the mannonate dehydratase family. Requires Fe(2+) as cofactor. The cofactor is Mn(2+).

It carries out the reaction D-mannonate = 2-dehydro-3-deoxy-D-gluconate + H2O. It functions in the pathway carbohydrate metabolism; pentose and glucuronate interconversion. Its function is as follows. Catalyzes the dehydration of D-mannonate. In Bacillus licheniformis (strain ATCC 14580 / DSM 13 / JCM 2505 / CCUG 7422 / NBRC 12200 / NCIMB 9375 / NCTC 10341 / NRRL NRS-1264 / Gibson 46), this protein is Mannonate dehydratase 1.